The following is a 514-amino-acid chain: Ribonuclease Y (514 aa).

Residues 3–23 (VLWMVLGLAIGIAVGAAAGYI) form a helical membrane-spanning segment. One can recognise a KH domain in the interval 203–266 (TVKAVELPSD…EVARIAMERL (64 aa)). Residues 330–423 (VLAHSVEVAN…VATADAVSAA (94 aa)) form the HD domain.

The protein belongs to the RNase Y family.

It localises to the cell membrane. In terms of biological role, endoribonuclease that initiates mRNA decay. The sequence is that of Ribonuclease Y from Rubrobacter xylanophilus (strain DSM 9941 / JCM 11954 / NBRC 16129 / PRD-1).